The following is an 84-amino-acid chain: Large ribosomal subunit protein bL27 (84 aa).

The disordered stretch occupies residues M1 to Y20.

The protein belongs to the bacterial ribosomal protein bL27 family.

This Francisella tularensis subsp. tularensis (strain FSC 198) protein is Large ribosomal subunit protein bL27.